The sequence spans 200 residues: Phospholipase A2 inhibitor gamma subunit B (200 aa).

An N-terminal signal peptide occupies residues 1–19 (MKFLLFCCLFGTFLATGMC). Intrachain disulfides connect C22/C46, C25/C32, C39/C67, C73/C94, C95/C100, C120/C145, C138/C165, and C171/C191. N31 carries an N-linked (GlcNAc...) asparagine glycan.

It belongs to the CNF-like-inhibitor family. In terms of assembly, heterodimer of subunit A and subunit B. In terms of processing, N-glycosylated. Expressed by the liver. Not expressed in esophagus, stomach, pancreas, spleen, gall bladder, small intestine, rectum, kidney, trachea, lung, testis and body fat.

Its subcellular location is the secreted. In terms of biological role, inhibits the enzymatic activity of phospholipase A2 (PA2). This Elaphe quadrivirgata (Japanese four-lined ratsnake) protein is Phospholipase A2 inhibitor gamma subunit B.